Here is a 197-residue protein sequence, read N- to C-terminus: Adenylyl-sulfate kinase (197 aa).

31–38 (GLSGAGKS) contributes to the ATP binding site. The Phosphoserine intermediate role is filled by S105.

This sequence belongs to the APS kinase family.

It catalyses the reaction adenosine 5'-phosphosulfate + ATP = 3'-phosphoadenylyl sulfate + ADP + H(+). It functions in the pathway sulfur metabolism; hydrogen sulfide biosynthesis; sulfite from sulfate: step 2/3. In terms of biological role, catalyzes the synthesis of activated sulfate. The sequence is that of Adenylyl-sulfate kinase from Aeromonas hydrophila subsp. hydrophila (strain ATCC 7966 / DSM 30187 / BCRC 13018 / CCUG 14551 / JCM 1027 / KCTC 2358 / NCIMB 9240 / NCTC 8049).